Here is a 479-residue protein sequence, read N- to C-terminus: Pre-glycoprotein polyprotein GP complex (479 aa).

The N-myristoyl glycine; by host moiety is linked to residue Gly-2. At 2–17 (GQLISFFQDIPIFFEE) the chain is on the extracellular side. A helical transmembrane segment spans residues 18-32 (ALNVALAVVTLLAII). Residue Lys-33 is a topological domain, cytoplasmic. A helical membrane pass occupies residues 34 to 53 (GIVNVWKSGILQLFVFLVLA). Extracellular loops occupy residues 54–58 (GRSCS) and 59–418 (FKVG…TLVD). Residue Cys-57 coordinates Zn(2+). Intrachain disulfides connect Cys-85-Cys-221, Cys-265-Cys-278, and Cys-287-Cys-296. 5 N-linked (GlcNAc...) asparagine; by host glycosylation sites follow: Asn-88, Asn-125, Asn-174, Asn-202, and Asn-214. N-linked (GlcNAc...) asparagine; by host glycosylation is found at Asn-314, Asn-351, Asn-359, Asn-376, and Asn-381. Cys-350 and Cys-371 are oxidised to a cystine. A helical transmembrane segment spans residues 419-439 (LCFWSAIFFTTSLFLHLVGFP). The Cytoplasmic segment spans residues 440–479 (THRHIQGDPCPLPHRLDRNGACRCGRFQKLGKQVTWKRKH). The Zn(2+) site is built by His-441, His-443, Cys-449, His-453, Cys-461, Cys-463, and His-479.

The protein belongs to the arenaviridae GPC protein family. In terms of assembly, homotetramer; disulfide-linked. Homotetramer. GP2 homotetramers bind through ionic interactions with GP1 homotetramers to form the GP complex together with the stable signal peptide. The GP-C polyprotein interacts with the host protease MBTPS1/SKI-1 resulting in the polyprotein processing. Post-translationally, specific enzymatic cleavages in vivo yield mature proteins. GP-C polyprotein is cleaved in the endoplasmic reticulum by the host protease MBTPS1. Only cleaved glycoprotein is incorporated into virions. In terms of processing, the SSP remains stably associated with the GP complex following cleavage by signal peptidase and plays crucial roles in the trafficking of GP through the secretory pathway. Myristoylation is necessary for GP2-mediated fusion activity.

Its subcellular location is the virion membrane. It localises to the host endoplasmic reticulum membrane. The protein localises to the host Golgi apparatus membrane. The protein resides in the host cell membrane. Its function is as follows. Interacts with the host receptor. Mediates virus attachment to host TFRC. This attachment induces virion internalization predominantly through clathrin-mediated endocytosis. In terms of biological role, class I viral fusion protein that directs fusion of viral and host endosomal membranes, leading to delivery of the nucleocapsid into the cytoplasm. Membrane fusion is mediated by irreversible conformational changes induced upon acidification in the endosome. Stable signal peptide (SSP): cleaved and functions as a signal peptide. In addition, it is also retained as the third component of the GP complex. The SSP is required for efficient glycoprotein expression, post-translational maturation cleavage of GP1 and GP2, glycoprotein transport to the cell surface plasma membrane, formation of infectious virus particles, and acid pH-dependent glycoprotein-mediated cell fusion. This chain is Pre-glycoprotein polyprotein GP complex, found in Homo sapiens (Human).